The sequence spans 52 residues: Conotoxin Cal6.25 (52 aa).

Residues 1–22 (MKLTHVLIVAVLVLTVCHLTMA) form the signal peptide. 3 cysteine pairs are disulfide-bonded: Cys-24–Cys-41, Cys-31–Cys-45, and Cys-40–Cys-50.

Expressed by the venom duct.

It is found in the secreted. Functionally, probable neurotoxin. This Californiconus californicus (California cone) protein is Conotoxin Cal6.25.